The chain runs to 1129 residues: Inositol hexakisphosphate and diphosphoinositol-pentakisphosphate kinase 2 (1129 aa).

Ser44 carries the phosphoserine modification. 59–60 (KK) is a substrate binding site. ATP is bound by residues Arg140, Lys193, His200, and Arg219. Residue 219-220 (RK) participates in substrate binding. The residue at position 229 (Ser229) is a Phosphoserine. ATP is bound by residues 243–246 (EEFM) and 252–254 (DVK). The substrate site is built by Lys254 and Arg268. ATP is bound by residues Ser270, Asp315, and 327 to 329 (DVN). 332 to 335 (SFVK) contributes to the substrate binding site. The tract at residues 377–448 (PTTSGTMMEL…VLDIARQLLM (72 aa)) is polyphosphoinositide-binding domain. Residues 904-945 (KGCEEDKNLPSGYGYRPASRENEGRRSLKTDDDEPHTSKRDE) form a disordered region. The span at 921-945 (ASRENEGRRSLKTDDDEPHTSKRDE) shows a compositional bias: basic and acidic residues. 3 positions are modified to phosphoserine: Ser1051, Ser1058, and Ser1066. Residues 1070–1129 (YTPTKILPTPPAALKSSKASSKAAAGGPSQAMAPHTSSRKKSINSKTEGHEPKKSTGKKR) form a disordered region. Residues 1081-1098 (AALKSSKASSKAAAGGPS) show a composition bias toward low complexity. Residues Ser1106 and Ser1107 each carry the phosphoserine modification.

The protein belongs to the histidine acid phosphatase family. VIP1 subfamily. In terms of tissue distribution, ubiquitously expressed. Expressed in the cochlear and vestibular sensory hair cells, supporting cells and spiral ganglion neurons.

It is found in the cytoplasm. The protein localises to the cytosol. It carries out the reaction 1D-myo-inositol hexakisphosphate + ATP = 1-diphospho-1D-myo-inositol 2,3,4,5,6-pentakisphosphate + ADP. It catalyses the reaction 5-diphospho-1D-myo-inositol 1,2,3,4,6-pentakisphosphate + ATP + H(+) = 1,5-bis(diphospho)-1D-myo-inositol 2,3,4,6-tetrakisphosphate + ADP. Its function is as follows. Bifunctional inositol kinase that acts in concert with the IP6K kinases IP6K1, IP6K2 and IP6K3 to synthesize the diphosphate group-containing inositol pyrophosphates diphosphoinositol pentakisphosphate, PP-InsP5, and bis-diphosphoinositol tetrakisphosphate, (PP)2-InsP4. PP-InsP5 and (PP)2-InsP4, also respectively called InsP7 and InsP8, regulate a variety of cellular processes, including apoptosis, vesicle trafficking, cytoskeletal dynamics, exocytosis, insulin signaling and neutrophil activation. Phosphorylates inositol hexakisphosphate (InsP6) at position 1 to produce PP-InsP5 which is in turn phosphorylated by IP6Ks to produce (PP)2-InsP4. Alternatively, phosphorylates PP-InsP5 at position 1, produced by IP6Ks from InsP6, to produce (PP)2-InsP4. Required for normal hearing. This chain is Inositol hexakisphosphate and diphosphoinositol-pentakisphosphate kinase 2, found in Mus musculus (Mouse).